Consider the following 565-residue polypeptide: Sulfite reductase [NADPH] hemoprotein beta-component (565 aa).

C429, C435, C474, and C478 together coordinate [4Fe-4S] cluster. C478 contributes to the siroheme binding site.

The protein belongs to the nitrite and sulfite reductase 4Fe-4S domain family. In terms of assembly, alpha(8)-beta(8). The alpha component is a flavoprotein, the beta component is a hemoprotein. Siroheme is required as a cofactor. It depends on [4Fe-4S] cluster as a cofactor.

It catalyses the reaction hydrogen sulfide + 3 NADP(+) + 3 H2O = sulfite + 3 NADPH + 4 H(+). It participates in sulfur metabolism; hydrogen sulfide biosynthesis; hydrogen sulfide from sulfite (NADPH route): step 1/1. Its function is as follows. Component of the sulfite reductase complex that catalyzes the 6-electron reduction of sulfite to sulfide. This is one of several activities required for the biosynthesis of L-cysteine from sulfate. This Shewanella baltica (strain OS155 / ATCC BAA-1091) protein is Sulfite reductase [NADPH] hemoprotein beta-component.